The following is a 250-amino-acid chain: Methylthioribulose-1-phosphate dehydratase (250 aa).

Substrate is bound at residue cysteine 103. Histidine 121 and histidine 123 together coordinate Zn(2+). The active-site Proton donor/acceptor is glutamate 146. Residue histidine 211 participates in Zn(2+) binding.

It belongs to the aldolase class II family. MtnB subfamily. Zn(2+) is required as a cofactor.

The protein resides in the cytoplasm. It carries out the reaction 5-(methylsulfanyl)-D-ribulose 1-phosphate = 5-methylsulfanyl-2,3-dioxopentyl phosphate + H2O. It participates in amino-acid biosynthesis; L-methionine biosynthesis via salvage pathway; L-methionine from S-methyl-5-thio-alpha-D-ribose 1-phosphate: step 2/6. Its function is as follows. Catalyzes the dehydration of methylthioribulose-1-phosphate (MTRu-1-P) into 2,3-diketo-5-methylthiopentyl-1-phosphate (DK-MTP-1-P). This Clavispora lusitaniae (strain ATCC 42720) (Yeast) protein is Methylthioribulose-1-phosphate dehydratase.